A 587-amino-acid chain; its full sequence is Proteasome-associated ATPase (587 aa).

A coiled-coil region spans residues 9 to 94; that stretch reads ARKAQHDAEI…KEEVDRLAQP (86 aa). Position 276–281 (276–281) interacts with ATP; the sequence is GCGKTL. Residues 586 to 587 are docks into pockets in the proteasome alpha-ring; the sequence is YL.

It belongs to the AAA ATPase family. Homohexamer. Assembles into a hexameric ring structure that caps the 20S proteasome core. Strongly interacts with the prokaryotic ubiquitin-like protein Pup through a hydrophobic interface; the interacting region of ARC lies in its N-terminal coiled-coil domain. There is one Pup binding site per ARC hexamer ring. Upon ATP-binding, the C-terminus of ARC interacts with the alpha-rings of the proteasome core, possibly by binding to the intersubunit pockets.

It participates in protein degradation; proteasomal Pup-dependent pathway. Functionally, ATPase which is responsible for recognizing, binding, unfolding and translocation of pupylated proteins into the bacterial 20S proteasome core particle. May be essential for opening the gate of the 20S proteasome via an interaction with its C-terminus, thereby allowing substrate entry and access to the site of proteolysis. Thus, the C-termini of the proteasomal ATPase may function like a 'key in a lock' to induce gate opening and therefore regulate proteolysis. This is Proteasome-associated ATPase from Thermomonospora curvata (strain ATCC 19995 / DSM 43183 / JCM 3096 / KCTC 9072 / NBRC 15933 / NCIMB 10081 / Henssen B9).